The following is a 351-amino-acid chain: MLKNDLFLRALKRQPVPRTPIWVMRQAGRYLPEYRAIREKTDFLTLCKTPELAAEVTIQPVDIIGVDAAIIFSDILVVNEAMGMDVQIIETKGIKLTPPIRSQVDIDRLIIPDIEEKLGYVMDAIRLTKKELDNRVPLIGFSGAAWTLFTYAVEGGGSKNYAFAKKMMYREPQMAHMLLSKISQVITEYLLMQVEAGADALQIFDSWASALSEDDYREFALPYIKESVQAIKTKYPDIPVIVFSKDCNTILSDIADTGCDAMGLGWNMDIAKARKELQDRVCIQGNMDPTVLYGTHDKIKAEAAKILKQFGQHTAESGHVFNLGHGILPDVDPANLKCLVDFVKEESPKYH.

Substrate-binding positions include Arg-25–Arg-29, Asp-74, Tyr-151, Ser-206, and His-325.

Belongs to the uroporphyrinogen decarboxylase family. As to quaternary structure, homodimer.

The protein localises to the cytoplasm. The catalysed reaction is uroporphyrinogen III + 4 H(+) = coproporphyrinogen III + 4 CO2. It functions in the pathway porphyrin-containing compound metabolism; protoporphyrin-IX biosynthesis; coproporphyrinogen-III from 5-aminolevulinate: step 4/4. In terms of biological role, catalyzes the decarboxylation of four acetate groups of uroporphyrinogen-III to yield coproporphyrinogen-III. This chain is Uroporphyrinogen decarboxylase, found in Prosthecochloris aestuarii (strain DSM 271 / SK 413).